We begin with the raw amino-acid sequence, 263 residues long: Small ribosomal subunit protein eS4 (263 aa).

The S4 RNA-binding domain occupies 42–104 (LPLIIFLRNR…TGENFRLIYD (63 aa)).

It belongs to the eukaryotic ribosomal protein eS4 family.

The polypeptide is Small ribosomal subunit protein eS4 (RPS4) (Cricetulus griseus (Chinese hamster)).